Reading from the N-terminus, the 49-residue chain is Large ribosomal subunit protein bL33B (49 aa).

The protein belongs to the bacterial ribosomal protein bL33 family.

This Geobacillus kaustophilus (strain HTA426) protein is Large ribosomal subunit protein bL33B.